Reading from the N-terminus, the 499-residue chain is Potassium voltage-gated channel subfamily A member 2 (499 aa).

The segment at methionine 1–glutamate 26 is disordered. The segment at methionine 1–methionine 125 is tetramerization domain. Residues methionine 1–glycine 160 are Cytoplasmic-facing. A helical transmembrane segment spans residues proline 161–leucine 182. The Extracellular portion of the chain corresponds to glutamate 183–proline 221. Residue asparagine 207 is glycosylated (N-linked (GlcNAc...) asparagine). A helical transmembrane segment spans residues phenylalanine 222–alanine 243. Cysteine 244 carries S-palmitoyl cysteine lipidation. At cysteine 244 to isoleucine 254 the chain is on the cytoplasmic side. A helical membrane pass occupies residues methionine 255–alanine 275. The Extracellular segment spans residues glutamate 276 to serine 289. A helical; Voltage-sensor membrane pass occupies residues leucine 290–histidine 310. Over serine 311–methionine 325 the chain is Cytoplasmic. The S4-S5 linker stretch occupies residues lysine 312–methionine 325. A helical transmembrane segment spans residues arginine 326–tyrosine 347. Residues phenylalanine 348 to isoleucine 361 are Extracellular-facing. The segment at residues proline 362–threonine 373 is an intramembrane region (helical). A Selectivity filter motif is present at residues threonine 374–aspartate 379. An intramembrane segment occupies threonine 374–valine 381. The Extracellular portion of the chain corresponds to proline 382–lysine 388. The chain crosses the membrane as a helical span at residues isoleucine 389 to tyrosine 417. Topologically, residues histidine 418–valine 499 are cytoplasmic. Tyrosine 429 is modified (phosphotyrosine). Residues serine 434, serine 440, serine 441, and serine 449 each carry the phosphoserine modification. Residue tyrosine 458 is modified to Phosphotyrosine. Serine 468 is subject to Phosphoserine. Residues threonine 497–valine 499 carry the PDZ-binding motif.

This sequence belongs to the potassium channel family. A (Shaker) (TC 1.A.1.2) subfamily. Kv1.2/KCNA2 sub-subfamily. As to quaternary structure, homotetramer and heterotetramer with other channel-forming alpha subunits, such as KCNA1, KCNA4, KCNA5, KCNA6 and KCNA7. Channel activity is regulated by interaction with the beta subunits, including KCNAB1 and KCNAB2. Identified in a complex with KCNA1 and KCNAB2. Identified in a complex with KCNA4 and FYN. Identified in a complex with KCNA5 and KCNAB1. Interacts with the beta subunit KCNAB1. Interacts with PTK2B. Interacts (via C-terminus) with CTTN. Interacts (via N-terminal cytoplasmic domain) with RHOA (GTP-bound form); this regulates channel activity by reducing location at the cell surface in response to CHRM1 activation. Interacts with DRD2. Interacts with SIGMAR1; cocaine consumption leads to increased interaction. Interacts with ADAM22. Interacts with CNTNAP2. Interacts (via C-terminus) with the PDZ domains of DLG1, DLG2 and DLG4. Interacts with ADAM11. Interacts with LYNX1. Post-translationally, phosphorylated on tyrosine residues; phosphorylation increases in response to ischemia. Phosphorylated on tyrosine residues by activated PTK2B/PYK2. Phosphorylation on tyrosine residues suppresses ion channel activity. Phosphorylated on tyrosine residues in response to CHRM1 activation; this abolishes interaction with CTTN. This is probably due to endocytosis of the phosphorylated channel subunits. Phosphorylated on serine residues in response to increased cAMP levels; phosphorylation is apparently not catalyzed by PKA. In terms of processing, N-glycosylated, with complex, sialylated N-glycans. Detected in portal vein myocytes (at protein level). Detected in portal vein. Brain, liver and kidney.

The protein localises to the cell membrane. It localises to the membrane. It is found in the cell projection. Its subcellular location is the axon. The protein resides in the synapse. The protein localises to the presynaptic cell membrane. It localises to the synaptosome. It is found in the endoplasmic reticulum membrane. Its subcellular location is the dendrite. The protein resides in the lamellipodium membrane. The protein localises to the cell junction. It localises to the paranodal septate junction. It catalyses the reaction K(+)(in) = K(+)(out). Its activity is regulated as follows. Inhibited by 4-aminopyridine (4-AP). Inhibited by dendrotoxin (DTX) and charybdotoxin (CTX), but not by tetraethylammonium (TEA). Inhibited by tityustoxin-K alpha (TsTX-Kalpha), a toxin that is highly specific for KCNA2. Inhibited by maurotoxin. Inhibited by kappaM conotoxins kappaM-RIIIJ and kappaM-RIIIK. In terms of biological role, voltage-gated potassium channel that mediates transmembrane potassium transport in excitable membranes, primarily in the brain and the central nervous system, but also in the cardiovascular system. Prevents aberrant action potential firing and regulates neuronal output. Forms tetrameric potassium-selective channels through which potassium ions pass in accordance with their electrochemical gradient. The channel alternates between opened and closed conformations in response to the voltage difference across the membrane. Can form functional homotetrameric channels and heterotetrameric channels that contain variable proportions of KCNA1, KCNA2, KCNA4, KCNA5, KCNA6, KCNA7, and possibly other family members as well; channel properties depend on the type of alpha subunits that are part of the channel. Channel properties are modulated by cytoplasmic beta subunits that regulate the subcellular location of the alpha subunits and promote rapid inactivation of delayed rectifier potassium channels. In vivo, membranes probably contain a mixture of heteromeric potassium channel complexes, making it difficult to assign currents observed in intact tissues to any particular potassium channel family member. Homotetrameric KCNA2 forms a delayed-rectifier potassium channel that opens in response to membrane depolarization, followed by slow spontaneous channel closure. In contrast, a heteromultimer formed by KCNA2 and KCNA4 shows rapid inactivation. Regulates neuronal excitability and plays a role as pacemaker in the regulation of neuronal action potentials. KCNA2-containing channels play a presynaptic role and prevent hyperexcitability and aberrant action potential firing. Response to toxins that are selective for KCNA2-containing potassium channels suggests that in Purkinje cells, dendritic subthreshold KCNA2-containing potassium channels prevent random spontaneous calcium spikes, suppressing dendritic hyperexcitability without hindering the generation of somatic action potentials, and thereby play an important role in motor coordination. Plays a role in the induction of long-term potentiation of neuron excitability in the CA3 layer of the hippocampus. May function as down-stream effector for G protein-coupled receptors and inhibit GABAergic inputs to basolateral amygdala neurons. May contribute to the regulation of neurotransmitter release, such as gamma-aminobutyric acid (GABA). Contributes to the regulation of the axonal release of the neurotransmitter dopamine. Reduced KCNA2 expression plays a role in the perception of neuropathic pain after peripheral nerve injury, but not acute pain. Plays a role in the regulation of the time spent in non-rapid eye movement (NREM) sleep. The chain is Potassium voltage-gated channel subfamily A member 2 (KCNA2) from Oryctolagus cuniculus (Rabbit).